We begin with the raw amino-acid sequence, 391 residues long: Casein kinase II subunit alpha (391 aa).

The interaction with beta subunit stretch occupies residues 36-41 (QDDYQL). The 286-residue stretch at 39–324 (YQLVRKLGRG…AREAMEHPYF (286 aa)) folds into the Protein kinase domain. ATP contacts are provided by residues 45-53 (LGRGKYSEV) and Lys68. The Proton acceptor role is filled by Asp156. 2 positions are modified to phosphothreonine; by CDK1: Thr344 and Thr360. Phosphoserine; by CDK1 is present on residues Ser362 and Ser370.

The protein belongs to the protein kinase superfamily. Ser/Thr protein kinase family. CK2 subfamily. Heterotetramer composed of two catalytic subunits (alpha chain and/or alpha' chain) and two regulatory subunits (beta chains). The tetramer can exist as a combination of 2 alpha/2 beta, 2 alpha'/2 beta or 1 alpha/1 alpha'/2 beta subunits. Also part of a CK2-SPT16-SSRP1 complex composed of SSRP1, SUPT16H, CSNK2A1, CSNK2A2 and CSNK2B, which forms following UV irradiation. Interacts with RNPS1. Interacts with SNAI1. Interacts with PML. Interacts with CCAR2. Interacts with HIRIP3. In terms of processing, phosphorylated at Thr-344, Thr-360, Ser-362 and Ser-370 by CDK1 in prophase and metaphase and dephosphorylated during anaphase. Phosphorylation does not directly affect casein kinase 2 activity, but may contribute to its regulation by forming binding sites for interacting proteins and/or targeting it to different compartments.

It is found in the nucleus. It catalyses the reaction L-seryl-[protein] + ATP = O-phospho-L-seryl-[protein] + ADP + H(+). The enzyme catalyses L-threonyl-[protein] + ATP = O-phospho-L-threonyl-[protein] + ADP + H(+). Constitutively active protein kinase whose activity is not directly affected by phosphorylation. Seems to be regulated by level of expression and localization. Functionally, catalytic subunit of a constitutively active serine/threonine-protein kinase complex that phosphorylates a large number of substrates containing acidic residues C-terminal to the phosphorylated serine or threonine. Regulates numerous cellular processes, such as cell cycle progression, apoptosis and transcription, as well as viral infection. May act as a regulatory node which integrates and coordinates numerous signals leading to an appropriate cellular response. During mitosis, functions as a component of the p53/TP53-dependent spindle assembly checkpoint (SAC) that maintains cyclin-B-CDK1 activity and G2 arrest in response to spindle damage. Also required for p53/TP53-mediated apoptosis, phosphorylating 'Ser-392' of p53/TP53 following UV irradiation. Phosphorylates a number of DNA repair proteins in response to DNA damage, such as MDC1, MRE11, RAD9A, RAD51 and HTATSF1, promoting their recruitment to DNA damage sites. Can also negatively regulate apoptosis. Phosphorylates the caspases CASP9 and CASP2 and the apoptotic regulator NOL3. Phosphorylation protects CASP9 from cleavage and activation by CASP8, and inhibits the dimerization of CASP2 and activation of CASP8. Phosphorylates YY1, protecting YY1 from cleavage by CASP7 during apoptosis. Regulates transcription by direct phosphorylation of RNA polymerases I, II, III and IV. Also phosphorylates and regulates numerous transcription factors including NF-kappa-B, STAT1, CREB1, IRF1, IRF2, ATF1, ATF4, SRF, MAX, JUN, FOS, MYC and MYB. Phosphorylates Hsp90 and its co-chaperones FKBP4 and CDC37, which is essential for chaperone function. Mediates sequential phosphorylation of FNIP1, promoting its gradual interaction with Hsp90, leading to activate both kinase and non-kinase client proteins of Hsp90. Regulates Wnt signaling by phosphorylating CTNNB1 and the transcription factor LEF1. Acts as an ectokinase that phosphorylates several extracellular proteins. Phosphorylates PML at 'Ser-565' and primes it for ubiquitin-mediated degradation. Plays an important role in the circadian clock function by phosphorylating BMAL1 at 'Ser-90' which is pivotal for its interaction with CLOCK and which controls CLOCK nuclear entry. Phosphorylates FMR1, promoting FMR1-dependent formation of a membraneless compartment. May phosphorylate histone H2A on 'Ser-1'. The polypeptide is Casein kinase II subunit alpha (CSNK2A1) (Oryctolagus cuniculus (Rabbit)).